The sequence spans 303 residues: Movement protein (303 aa).

A compositionally biased stretch (polar residues) spans 1–18; that stretch reads MSNIVSPFSGSSRTTSDV. 2 disordered regions span residues 1–24 and 267–303; these read MSNIVSPFSGSSRTTSDVGKQAGG and EESESPSALGRGVKDSKSVSASSVAGLPVSSPTLRIK.

Belongs to the bromovirus movement protein family. In terms of processing, phosphorylated by host.

It is found in the host cell junction. Its subcellular location is the host plasmodesma. Transports viral genome to neighboring plant cells directly through plasmosdesmata, without any budding. The movement protein allows efficient cell to cell propagation, by bypassing the host cell wall barrier. Acts by forming a tubular structure at the host plasmodesmata, enlarging it enough to allow free passage of virion capsids. The chain is Movement protein from Brome mosaic virus (BMV).